Reading from the N-terminus, the 657-residue chain is Penicillin-binding protein activator LpoA (657 aa).

Residues 1–25 (MLSSTFVRSKAGLVPVILAALILAA) form the signal peptide. The N-palmitoyl cysteine moiety is linked to residue cysteine 26. Residue cysteine 26 is the site of S-diacylglycerol cysteine attachment.

The protein belongs to the LpoA family. As to quaternary structure, interacts with PBP1a.

It localises to the cell outer membrane. Its function is as follows. Regulator of peptidoglycan synthesis that is essential for the function of penicillin-binding protein 1A (PBP1a). This Yersinia pseudotuberculosis serotype O:1b (strain IP 31758) protein is Penicillin-binding protein activator LpoA.